The primary structure comprises 170 residues: Transcription factor E (170 aa).

Residues 1–93 (MKDVYLYIVE…TWYVDDEIIK (93 aa)) enclose the HTH TFE/IIEalpha-type domain.

It belongs to the TFE family. Monomer. Interaction with RNA polymerase subunits RpoF and RpoE is necessary for Tfe stimulatory transcription activity. Able to interact with Tbp and RNA polymerase in the absence of DNA promoter. Interacts both with the preinitiation and elongation complexes.

Functionally, transcription factor that plays a role in the activation of archaeal genes transcribed by RNA polymerase. Facilitates transcription initiation by enhancing TATA-box recognition by TATA-box-binding protein (Tbp), and transcription factor B (Tfb) and RNA polymerase recruitment. Not absolutely required for transcription in vitro, but particularly important in cases where Tbp or Tfb function is not optimal. It dynamically alters the nucleic acid-binding properties of RNA polymerases by stabilizing the initiation complex and destabilizing elongation complexes. Seems to translocate with the RNA polymerase following initiation and acts by binding to the non template strand of the transcription bubble in elongation complexes. The sequence is that of Transcription factor E from Pyrobaculum aerophilum (strain ATCC 51768 / DSM 7523 / JCM 9630 / CIP 104966 / NBRC 100827 / IM2).